The following is a 115-amino-acid chain: NADH-ubiquinone oxidoreductase chain 3 (115 aa).

The next 3 membrane-spanning stretches (helical) occupy residues 4–24, 55–75, and 87–107; these read LTVL…AFWL, FFLV…LLPL, and MMLT…YEWM.

The protein belongs to the complex I subunit 3 family. As to quaternary structure, core subunit of respiratory chain NADH dehydrogenase (Complex I) which is composed of 45 different subunits. Interacts with TMEM186. Interacts with TMEM242.

The protein resides in the mitochondrion inner membrane. The catalysed reaction is a ubiquinone + NADH + 5 H(+)(in) = a ubiquinol + NAD(+) + 4 H(+)(out). Its function is as follows. Core subunit of the mitochondrial membrane respiratory chain NADH dehydrogenase (Complex I) which catalyzes electron transfer from NADH through the respiratory chain, using ubiquinone as an electron acceptor. Essential for the catalytic activity of complex I. In Peromyscus slevini (Slevin's mouse), this protein is NADH-ubiquinone oxidoreductase chain 3.